Here is a 381-residue protein sequence, read N- to C-terminus: Dual-specificity RNA methyltransferase RlmN (381 aa).

E95 serves as the catalytic Proton acceptor. The Radical SAM core domain maps to 101-347 (EDDRGTLCVS…TTVRKTRGDD (247 aa)). An intrachain disulfide couples C108 to C352. [4Fe-4S] cluster-binding residues include C115, C119, and C122. S-adenosyl-L-methionine contacts are provided by residues 178–179 (GE), S210, 232–234 (SLH), and N309. Catalysis depends on C352, which acts as the S-methylcysteine intermediate.

This sequence belongs to the radical SAM superfamily. RlmN family. [4Fe-4S] cluster is required as a cofactor.

It localises to the cytoplasm. The catalysed reaction is adenosine(2503) in 23S rRNA + 2 reduced [2Fe-2S]-[ferredoxin] + 2 S-adenosyl-L-methionine = 2-methyladenosine(2503) in 23S rRNA + 5'-deoxyadenosine + L-methionine + 2 oxidized [2Fe-2S]-[ferredoxin] + S-adenosyl-L-homocysteine. It catalyses the reaction adenosine(37) in tRNA + 2 reduced [2Fe-2S]-[ferredoxin] + 2 S-adenosyl-L-methionine = 2-methyladenosine(37) in tRNA + 5'-deoxyadenosine + L-methionine + 2 oxidized [2Fe-2S]-[ferredoxin] + S-adenosyl-L-homocysteine. Functionally, specifically methylates position 2 of adenine 2503 in 23S rRNA and position 2 of adenine 37 in tRNAs. m2A2503 modification seems to play a crucial role in the proofreading step occurring at the peptidyl transferase center and thus would serve to optimize ribosomal fidelity. In Bordetella petrii (strain ATCC BAA-461 / DSM 12804 / CCUG 43448), this protein is Dual-specificity RNA methyltransferase RlmN.